A 949-amino-acid polypeptide reads, in one-letter code: Copper-transporting ATPase PAA1, chloroplastic (949 aa).

Residues 1–103 (MESTLSAFST…SSSPSFRSIS (103 aa)) constitute a chloroplast transit peptide. The span at 113-126 (YNGGSGGGGGGGSE) shows a compositional bias: gly residues. Positions 113-142 (YNGGSGGGGGGGSESGDSKSKLGANASDGV) are disordered. Positions 148–222 (DIIILDVGGM…HLTNCGFQST (75 aa)) constitute an HMA domain. Positions 159 and 162 each coordinate Cu(+). Transmembrane regions (helical) follow at residues 253–274 (LAVS…FLGV), 287–306 (FHVS…LVLD), 314–334 (GSPN…SVSS), 349–369 (EEPV…QRAK), 502–524 (VAGR…WNLF), and 543–560 (LQLS…ALGL). The 4-aspartylphosphate intermediate role is filled by Asp598. 807 to 814 (GDGINDAA) contributes to the ATP binding site. Positions 808 and 812 each coordinate Mg(2+). The next 2 membrane-spanning stretches (helical) occupy residues 863–882 (KQNL…IAAG) and 895–913 (SMAG…TNSL). The interval 925-949 (DKNVKPEPKEGTKQPHENTRWKQSS) is disordered.

Belongs to the cation transport ATPase (P-type) (TC 3.A.3) family. Type IB subfamily. As to expression, expressed in the shoots and roots.

It localises to the plastid. It is found in the chloroplast membrane. The catalysed reaction is Cu(+)(in) + ATP + H2O = Cu(+)(out) + ADP + phosphate + H(+). Functionally, mediates copper transfer across the plastid envelope. Required for the delivery of copper into the plastid stroma, which is essential for the function of copper proteins. Seems to be selective for monovalent copper Cu(+) transport. Also plays a role in glucose signaling-mediated cell proliferation of root meristem in non-green tissues. This chain is Copper-transporting ATPase PAA1, chloroplastic (PAA1), found in Arabidopsis thaliana (Mouse-ear cress).